The following is a 302-amino-acid chain: Oxygen-dependent coproporphyrinogen-III oxidase (302 aa).

Serine 94 contributes to the substrate binding site. Histidine 98 and histidine 108 together coordinate a divalent metal cation. Histidine 108 functions as the Proton donor in the catalytic mechanism. 110 to 112 (NVR) lines the substrate pocket. Positions 147 and 177 each coordinate a divalent metal cation. Residues 242–277 (YVEFNLVYDRGTLFGLQTGGRTESILMSMPPLVRWQ) are important for dimerization. Residue 260 to 262 (GGR) participates in substrate binding.

It belongs to the aerobic coproporphyrinogen-III oxidase family. In terms of assembly, homodimer. Requires a divalent metal cation as cofactor.

It is found in the cytoplasm. The catalysed reaction is coproporphyrinogen III + O2 + 2 H(+) = protoporphyrinogen IX + 2 CO2 + 2 H2O. It functions in the pathway porphyrin-containing compound metabolism; protoporphyrin-IX biosynthesis; protoporphyrinogen-IX from coproporphyrinogen-III (O2 route): step 1/1. In terms of biological role, involved in the heme biosynthesis. Catalyzes the aerobic oxidative decarboxylation of propionate groups of rings A and B of coproporphyrinogen-III to yield the vinyl groups in protoporphyrinogen-IX. The chain is Oxygen-dependent coproporphyrinogen-III oxidase from Shewanella oneidensis (strain ATCC 700550 / JCM 31522 / CIP 106686 / LMG 19005 / NCIMB 14063 / MR-1).